We begin with the raw amino-acid sequence, 244 residues long: Probable transcriptional regulatory protein Xfasm12_1059 (244 aa).

Belongs to the TACO1 family.

It is found in the cytoplasm. In Xylella fastidiosa (strain M12), this protein is Probable transcriptional regulatory protein Xfasm12_1059.